We begin with the raw amino-acid sequence, 201 residues long: Rac-like GTP-binding protein ARAC2 (201 aa).

GTP is bound at residue 13-20 (GDGAVGKT). The short motif at 35–43 (YVPTVFDNF) is the Effector region element. GTP-binding positions include 60–64 (DTAGQ) and 118–121 (TKLD). A Cysteine methyl ester modification is found at Cys198. The S-geranylgeranyl cysteine moiety is linked to residue Cys198. The propeptide at 199–201 (FFL) is removed in mature form.

This sequence belongs to the small GTPase superfamily. Rho family. In terms of tissue distribution, expressed exclusively in the root, hypocotyl and stem.

It localises to the cytoplasm. It is found in the membrane. Inactive GDP-bound Rho GTPases reside in the cytosol, are found in a complex with Rho GDP-dissociation inhibitors (Rho GDIs), and are released from the GDI protein in order to translocate to membranes upon activation. The chain is Rac-like GTP-binding protein ARAC2 (ARAC2) from Arabidopsis thaliana (Mouse-ear cress).